Reading from the N-terminus, the 406-residue chain is Phosphorylase b kinase gamma catalytic chain, liver/testis isoform (406 aa).

A Protein kinase domain is found at 24 to 291 (YDPKDIIGRG…AEQALQHPFF (268 aa)). ATP is bound by residues 30–38 (IGRGVSSVV) and K53. The active-site Proton acceptor is D153. The interval 306-330 (QRFRVAVWTILAAGRVALSSHRLRP) is calmodulin-binding (domain-N). A calmodulin-binding (domain-C) region spans residues 346–370 (VRRLIDNCAFRLYGHWVKKGEQQNR).

The protein belongs to the protein kinase superfamily. CAMK Ser/Thr protein kinase family. As to quaternary structure, hexadecamer of 4 heterotetramers, each composed of alpha, beta, gamma, and delta subunits. Alpha (PHKA1 or PHKA2) and beta (PHKB) are regulatory subunits, gamma (PHKG1 or PHKG2) is the catalytic subunit, and delta is calmodulin.

It catalyses the reaction 2 ATP + phosphorylase b = 2 ADP + phosphorylase a.. Its function is as follows. Catalytic subunit of the phosphorylase b kinase (PHK), which mediates the neural and hormonal regulation of glycogen breakdown (glycogenolysis) by phosphorylating and thereby activating glycogen phosphorylase. May regulate glycogeneolysis in the testis. In vitro, phosphorylates PYGM. The polypeptide is Phosphorylase b kinase gamma catalytic chain, liver/testis isoform (Phkg2) (Mus musculus (Mouse)).